Here is a 200-residue protein sequence, read N- to C-terminus: LexA repressor (200 aa).

The H-T-H motif DNA-binding region spans 28 to 48 (RAEIARILGFKSANAAEEHIK). Catalysis depends on for autocatalytic cleavage activity residues serine 118 and lysine 155.

It belongs to the peptidase S24 family. In terms of assembly, homodimer.

It carries out the reaction Hydrolysis of Ala-|-Gly bond in repressor LexA.. Its function is as follows. Represses a number of genes involved in the response to DNA damage (SOS response), including recA and lexA. In the presence of single-stranded DNA, RecA interacts with LexA causing an autocatalytic cleavage which disrupts the DNA-binding part of LexA, leading to derepression of the SOS regulon and eventually DNA repair. This chain is LexA repressor, found in Cellvibrio japonicus (strain Ueda107) (Pseudomonas fluorescens subsp. cellulosa).